The chain runs to 336 residues: Inositol 2-dehydrogenase (336 aa).

Belongs to the Gfo/Idh/MocA family. Homotetramer.

It catalyses the reaction myo-inositol + NAD(+) = scyllo-inosose + NADH + H(+). Involved in the oxidation of myo-inositol (MI) to 2-keto-myo-inositol (2KMI or 2-inosose). This is Inositol 2-dehydrogenase from Salmonella agona (strain SL483).